We begin with the raw amino-acid sequence, 435 residues long: ATP-dependent protease ATPase subunit HslU (435 aa).

Residues Val-18, Gly-60–Glu-65, Asp-248, Glu-313, and Arg-385 contribute to the ATP site.

It belongs to the ClpX chaperone family. HslU subfamily. A double ring-shaped homohexamer of HslV is capped on each side by a ring-shaped HslU homohexamer. The assembly of the HslU/HslV complex is dependent on binding of ATP.

It is found in the cytoplasm. Its function is as follows. ATPase subunit of a proteasome-like degradation complex; this subunit has chaperone activity. The binding of ATP and its subsequent hydrolysis by HslU are essential for unfolding of protein substrates subsequently hydrolyzed by HslV. HslU recognizes the N-terminal part of its protein substrates and unfolds these before they are guided to HslV for hydrolysis. The protein is ATP-dependent protease ATPase subunit HslU of Parvibaculum lavamentivorans (strain DS-1 / DSM 13023 / NCIMB 13966).